The sequence spans 197 residues: Imidazoleglycerol-phosphate dehydratase (197 aa).

Belongs to the imidazoleglycerol-phosphate dehydratase family.

The protein localises to the cytoplasm. The catalysed reaction is D-erythro-1-(imidazol-4-yl)glycerol 3-phosphate = 3-(imidazol-4-yl)-2-oxopropyl phosphate + H2O. The protein operates within amino-acid biosynthesis; L-histidine biosynthesis; L-histidine from 5-phospho-alpha-D-ribose 1-diphosphate: step 6/9. This is Imidazoleglycerol-phosphate dehydratase from Syntrophobacter fumaroxidans (strain DSM 10017 / MPOB).